The following is a 188-amino-acid chain: Elongation factor P (188 aa).

Belongs to the elongation factor P family.

The protein resides in the cytoplasm. It participates in protein biosynthesis; polypeptide chain elongation. In terms of biological role, involved in peptide bond synthesis. Stimulates efficient translation and peptide-bond synthesis on native or reconstituted 70S ribosomes in vitro. Probably functions indirectly by altering the affinity of the ribosome for aminoacyl-tRNA, thus increasing their reactivity as acceptors for peptidyl transferase. The protein is Elongation factor P of Wolbachia sp. subsp. Brugia malayi (strain TRS).